The chain runs to 503 residues: AMP phosphorylase (503 aa).

AMP-binding positions include G168, 194 to 199, and T203; that span reads SRAITS. D256 functions as the Proton donor in the catalytic mechanism. Residues S264 and K288 each contribute to the AMP site.

This sequence belongs to the thymidine/pyrimidine-nucleoside phosphorylase family. Type 2 subfamily.

It catalyses the reaction AMP + phosphate = alpha-D-ribose 1,5-bisphosphate + adenine. The enzyme catalyses CMP + phosphate = cytosine + alpha-D-ribose 1,5-bisphosphate. It carries out the reaction UMP + phosphate = alpha-D-ribose 1,5-bisphosphate + uracil. Functionally, catalyzes the conversion of AMP and phosphate to adenine and ribose 1,5-bisphosphate (R15P). Exhibits phosphorylase activity toward CMP and UMP in addition to AMP. Functions in an archaeal AMP degradation pathway, together with R15P isomerase and RubisCO. This Methanocaldococcus jannaschii (strain ATCC 43067 / DSM 2661 / JAL-1 / JCM 10045 / NBRC 100440) (Methanococcus jannaschii) protein is AMP phosphorylase.